Consider the following 357-residue polypeptide: UPF0283 membrane protein BOV_0999 (357 aa).

Positions 1–36 (MSDKTPRKPTAFRLEQPARVSAASEQEEPRRPRAVK) are disordered. Residues 27–36 (EEPRRPRAVK) are compositionally biased toward basic and acidic residues. 2 helical membrane-spanning segments follow: residues 78–98 (ILFGALGILVSFAIGIWTEDL) and 109–129 (LGWTALGVAMVALAAFAAIIL).

It belongs to the UPF0283 family.

The protein localises to the cell inner membrane. The protein is UPF0283 membrane protein BOV_0999 of Brucella ovis (strain ATCC 25840 / 63/290 / NCTC 10512).